The sequence spans 515 residues: Tyrosine decarboxylase 1 (515 aa).

2 repeat units span residues D81 to E138 and V141 to Q192. A 2 X approximate tandem repeats region spans residues D81–Q192. Residue A105 participates in substrate binding. The pyridoxal 5'-phosphate site is built by T169 and C170. Substrate is bound at residue H205. 2 residues coordinate pyridoxal 5'-phosphate: T264 and N318. The residue at position 321 (K321) is an N6-(pyridoxal phosphate)lysine.

The protein belongs to the group II decarboxylase family. It depends on pyridoxal 5'-phosphate as a cofactor. In terms of tissue distribution, mostly expressed in bulbs, and, to a lower extent, in stems, roots, leaves and flowers.

The enzyme catalyses L-tyrosine + H(+) = tyramine + CO2. The protein operates within alkaloid biosynthesis. Functionally, catalyzes the decarboxylation of L-tyrosine to tyramine, which is converted to norbelladine, a precursor to all Amaryllidaceae alkaloids such as galanthamine, lycorine and haemanthamine, and including haemanthamine- and crinamine-type alkaloids, promising anticancer agents. The sequence is that of Tyrosine decarboxylase 1 from Narcissus pseudonarcissus (Daffodil).